The sequence spans 255 residues: tRNA (guanine-N(7)-)-methyltransferase (255 aa).

Residues 1 to 29 form a disordered region; the sequence is MMHDDPNEAGLPPDDAALPDEAADGADEV. Acidic residues predominate over residues 17-27; the sequence is ALPDEAADGAD. S-adenosyl-L-methionine contacts are provided by E86, E111, D138, and D161. D161 is a catalytic residue. Residues K165, D197, and 232-235 contribute to the substrate site; that span reads TKFE.

The protein belongs to the class I-like SAM-binding methyltransferase superfamily. TrmB family.

It carries out the reaction guanosine(46) in tRNA + S-adenosyl-L-methionine = N(7)-methylguanosine(46) in tRNA + S-adenosyl-L-homocysteine. The protein operates within tRNA modification; N(7)-methylguanine-tRNA biosynthesis. Catalyzes the formation of N(7)-methylguanine at position 46 (m7G46) in tRNA. This is tRNA (guanine-N(7)-)-methyltransferase from Burkholderia ambifaria (strain ATCC BAA-244 / DSM 16087 / CCUG 44356 / LMG 19182 / AMMD) (Burkholderia cepacia (strain AMMD)).